Reading from the N-terminus, the 148-residue chain is MKVLLLQDVEHLGKAGEIKDVSGGFGRNYLLPKGFAVLATKSQVKQAEERLAAQRRKAEAARKEAEALAARLAELTLTFTVKVGEQDRLYGSVTNADIAAKLHEVAGIEIDRRKIGLEDPIKRTGEYEVPVELMSGVSSTLKVVVVGE.

The protein belongs to the bacterial ribosomal protein bL9 family.

Binds to the 23S rRNA. This is Large ribosomal subunit protein bL9 from Chloroflexus aurantiacus (strain ATCC 29366 / DSM 635 / J-10-fl).